The primary structure comprises 289 residues: Inorganic pyrophosphatase (289 aa).

Serine 2 is modified (N-acetylserine). Lysine 57 is subject to N6-acetyllysine. Residues aspartate 116, aspartate 121, and aspartate 153 each contribute to the Mg(2+) site. An N6-acetyllysine modification is found at lysine 228. Serine 250 is modified (phosphoserine).

Belongs to the PPase family. Homodimer. Requires Mg(2+) as cofactor. In terms of tissue distribution, expressed ubiquitously.

It localises to the cytoplasm. It catalyses the reaction diphosphate + H2O = 2 phosphate + H(+). The sequence is that of Inorganic pyrophosphatase (PPA1) from Homo sapiens (Human).